A 94-amino-acid chain; its full sequence is Integration host factor subunit beta (94 aa).

This sequence belongs to the bacterial histone-like protein family. As to quaternary structure, heterodimer of an alpha and a beta chain.

This protein is one of the two subunits of integration host factor, a specific DNA-binding protein that functions in genetic recombination as well as in transcriptional and translational control. The chain is Integration host factor subunit beta from Buchnera aphidicola subsp. Acyrthosiphon pisum (strain 5A).